The chain runs to 404 residues: Probable tRNA sulfurtransferase (404 aa).

One can recognise a THUMP domain in the interval 60–165 (QPVAESLKQI…EEAAYISYET (106 aa)). ATP-binding positions include 183-184 (ML), 208-209 (HF), Arg265, Gly287, and Gln296.

It belongs to the ThiI family.

Its subcellular location is the cytoplasm. It catalyses the reaction [ThiI sulfur-carrier protein]-S-sulfanyl-L-cysteine + a uridine in tRNA + 2 reduced [2Fe-2S]-[ferredoxin] + ATP + H(+) = [ThiI sulfur-carrier protein]-L-cysteine + a 4-thiouridine in tRNA + 2 oxidized [2Fe-2S]-[ferredoxin] + AMP + diphosphate. It carries out the reaction [ThiS sulfur-carrier protein]-C-terminal Gly-Gly-AMP + S-sulfanyl-L-cysteinyl-[cysteine desulfurase] + AH2 = [ThiS sulfur-carrier protein]-C-terminal-Gly-aminoethanethioate + L-cysteinyl-[cysteine desulfurase] + A + AMP + 2 H(+). It functions in the pathway cofactor biosynthesis; thiamine diphosphate biosynthesis. Catalyzes the ATP-dependent transfer of a sulfur to tRNA to produce 4-thiouridine in position 8 of tRNAs, which functions as a near-UV photosensor. Also catalyzes the transfer of sulfur to the sulfur carrier protein ThiS, forming ThiS-thiocarboxylate. This is a step in the synthesis of thiazole, in the thiamine biosynthesis pathway. The sulfur is donated as persulfide by IscS. This chain is Probable tRNA sulfurtransferase, found in Streptococcus sanguinis (strain SK36).